The sequence spans 257 residues: MDVIPAIDLLDGKCVRLVQGNYDKVNVFHDDPLKVALYWQRLGAPRLHLVDLDAAKTGEPRNYDLIGKIVASLEIPVQVGGGLRSRQAVADLFLQGVNRAILGTVALENPKLVASLAAEYPGRIWVGLDARDGYVATRGWLETSKILATDLAQNMAAMGVAGFVYTDIQRDGTLQGPNIPALRQLLAVTNRPVIASGGVSSLNDILSLFALTPHGLVGAIVGKALYTKAMDLREAVRAVGQGRWQDIPPDLGSTTWA.

D8 functions as the Proton acceptor in the catalytic mechanism. Residue D129 is the Proton donor of the active site.

The protein belongs to the HisA/HisF family.

It is found in the cytoplasm. The enzyme catalyses 1-(5-phospho-beta-D-ribosyl)-5-[(5-phospho-beta-D-ribosylamino)methylideneamino]imidazole-4-carboxamide = 5-[(5-phospho-1-deoxy-D-ribulos-1-ylimino)methylamino]-1-(5-phospho-beta-D-ribosyl)imidazole-4-carboxamide. It participates in amino-acid biosynthesis; L-histidine biosynthesis; L-histidine from 5-phospho-alpha-D-ribose 1-diphosphate: step 4/9. The protein is 1-(5-phosphoribosyl)-5-[(5-phosphoribosylamino)methylideneamino] imidazole-4-carboxamide isomerase of Thermosynechococcus vestitus (strain NIES-2133 / IAM M-273 / BP-1).